The following is a 273-amino-acid chain: Ribosomal RNA small subunit methyltransferase A (273 aa).

Residues N18, L20, G45, E66, D91, and N113 each coordinate S-adenosyl-L-methionine.

This sequence belongs to the class I-like SAM-binding methyltransferase superfamily. rRNA adenine N(6)-methyltransferase family. RsmA subfamily.

It is found in the cytoplasm. The enzyme catalyses adenosine(1518)/adenosine(1519) in 16S rRNA + 4 S-adenosyl-L-methionine = N(6)-dimethyladenosine(1518)/N(6)-dimethyladenosine(1519) in 16S rRNA + 4 S-adenosyl-L-homocysteine + 4 H(+). In terms of biological role, specifically dimethylates two adjacent adenosines (A1518 and A1519) in the loop of a conserved hairpin near the 3'-end of 16S rRNA in the 30S particle. May play a critical role in biogenesis of 30S subunits. This Escherichia coli O139:H28 (strain E24377A / ETEC) protein is Ribosomal RNA small subunit methyltransferase A.